A 429-amino-acid chain; its full sequence is Glutamate-1-semialdehyde 2,1-aminomutase (429 aa).

N6-(pyridoxal phosphate)lysine is present on Lys-267.

This sequence belongs to the class-III pyridoxal-phosphate-dependent aminotransferase family. HemL subfamily. Homodimer. Pyridoxal 5'-phosphate serves as cofactor.

The protein resides in the cytoplasm. It catalyses the reaction (S)-4-amino-5-oxopentanoate = 5-aminolevulinate. It functions in the pathway porphyrin-containing compound metabolism; protoporphyrin-IX biosynthesis; 5-aminolevulinate from L-glutamyl-tRNA(Glu): step 2/2. This is Glutamate-1-semialdehyde 2,1-aminomutase from Herpetosiphon aurantiacus (strain ATCC 23779 / DSM 785 / 114-95).